The primary structure comprises 492 residues: NADH-quinone oxidoreductase subunit N (492 aa).

Transmembrane regions (helical) follow at residues 12 to 32 (LLPY…MIAI), 44 to 64 (ISVV…AGII), 76 to 96 (LFVI…CALA), 115 to 135 (LYLL…AQHL), 138 to 158 (FFMS…YTYM), 169 to 189 (YLVL…FIYA), 212 to 232 (LILG…AAPF), 244 to 264 (PAPI…ALAV), 272 to 292 (LLAL…SILL), 306 to 326 (LLGY…VSIG), 334 to 354 (SMYM…VTLM), 381 to 401 (TAVM…AGFI), 416 to 438 (WFLA…RVLL), and 463 to 483 (IMVI…NSMI).

The protein belongs to the complex I subunit 2 family. In terms of assembly, NDH-1 is composed of 14 different subunits. Subunits NuoA, H, J, K, L, M, N constitute the membrane sector of the complex.

The protein localises to the cell inner membrane. It carries out the reaction a quinone + NADH + 5 H(+)(in) = a quinol + NAD(+) + 4 H(+)(out). In terms of biological role, NDH-1 shuttles electrons from NADH, via FMN and iron-sulfur (Fe-S) centers, to quinones in the respiratory chain. The immediate electron acceptor for the enzyme in this species is believed to be ubiquinone. Couples the redox reaction to proton translocation (for every two electrons transferred, four hydrogen ions are translocated across the cytoplasmic membrane), and thus conserves the redox energy in a proton gradient. The protein is NADH-quinone oxidoreductase subunit N of Psychrobacter arcticus (strain DSM 17307 / VKM B-2377 / 273-4).